Consider the following 134-residue polypeptide: Small ribosomal subunit protein bS6 (134 aa).

Positions 113–122 (NKDIKEKEQP) are enriched in basic and acidic residues. Positions 113–134 (NKDIKEKEQPSESNVDADLKVN) are disordered.

Belongs to the bacterial ribosomal protein bS6 family.

Binds together with bS18 to 16S ribosomal RNA. This chain is Small ribosomal subunit protein bS6, found in Borrelia recurrentis (strain A1).